Reading from the N-terminus, the 615-residue chain is DNA mismatch repair protein MutL (615 aa).

The disordered stretch occupies residues 362 to 397 (HFAEPAVREPVAPRYTPAPASGSRPAAPWPNAQPGY). The span at 378–391 (PAPASGSRPAAPWP) shows a compositional bias: low complexity.

Belongs to the DNA mismatch repair MutL/HexB family.

This protein is involved in the repair of mismatches in DNA. It is required for dam-dependent methyl-directed DNA mismatch repair. May act as a 'molecular matchmaker', a protein that promotes the formation of a stable complex between two or more DNA-binding proteins in an ATP-dependent manner without itself being part of a final effector complex. In Escherichia coli O17:K52:H18 (strain UMN026 / ExPEC), this protein is DNA mismatch repair protein MutL.